The following is a 159-amino-acid chain: Defense protein l(2)34Fc (159 aa).

The first 17 residues, 1 to 17 (MFRLLVLAACLAISVHA), serve as a signal peptide directing secretion. Positions 18–159 (YSDGAPKAAC…GRVTKDIDVE (142 aa)) constitute a Reelin domain. A disulfide bridge connects residues Cys27 and Cys99.

Belongs to the insect defense protein family.

The protein localises to the secreted. Its function is as follows. May have antimicrobial activity. A late response immune regulated gene that is negatively regulated by spz during the immune response. The protein is Defense protein l(2)34Fc (l(2)34Fc) of Drosophila melanogaster (Fruit fly).